The primary structure comprises 98 residues: NADH-ubiquinone oxidoreductase chain 4L (98 aa).

3 helical membrane passes run 2–22 (TQAS…TLIF), 29–49 (TLLC…MTAL), and 61–81 (IVML…LAMI).

This sequence belongs to the complex I subunit 4L family. In terms of assembly, core subunit of respiratory chain NADH dehydrogenase (Complex I) which is composed of 45 different subunits.

It localises to the mitochondrion inner membrane. The catalysed reaction is a ubiquinone + NADH + 5 H(+)(in) = a ubiquinol + NAD(+) + 4 H(+)(out). Its function is as follows. Core subunit of the mitochondrial membrane respiratory chain NADH dehydrogenase (Complex I) which catalyzes electron transfer from NADH through the respiratory chain, using ubiquinone as an electron acceptor. Part of the enzyme membrane arm which is embedded in the lipid bilayer and involved in proton translocation. The protein is NADH-ubiquinone oxidoreductase chain 4L (MT-ND4L) of Calomys musculinus (Drylands vesper mouse).